We begin with the raw amino-acid sequence, 485 residues long: GTPase Obg (485 aa).

Positions 2–159 (SKFIDRVVLH…RDLVLELKSV (158 aa)) constitute an Obg domain. Residues 64-84 (PHAKAGNGKPGEGGNRDGKMG) are disordered. Residues 160 to 340 (ADVGLVGFPS…LTFALADLVR (181 aa)) enclose the OBG-type G domain. GTP contacts are provided by residues 166–173 (GFPSAGKS), 191–195 (FTTLV), 212–215 (DVPG), 292–295 (NKTD), and 321–323 (SAV). Residues Ser-173 and Thr-193 each contribute to the Mg(2+) site. The 81-residue stretch at 358-438 (PIAVDESGFT…IGDVTFDWEP (81 aa)) folds into the OCT domain. The segment covering 457-469 (LEQSDRVSAAERK) has biased composition (basic and acidic residues). The disordered stretch occupies residues 457-485 (LEQSDRVSAAERKHASRVRRGLVEDDEQR).

This sequence belongs to the TRAFAC class OBG-HflX-like GTPase superfamily. OBG GTPase family. As to quaternary structure, monomer. It depends on Mg(2+) as a cofactor.

The protein localises to the cytoplasm. Its function is as follows. An essential GTPase which binds GTP, GDP and possibly (p)ppGpp with moderate affinity, with high nucleotide exchange rates and a fairly low GTP hydrolysis rate. Plays a role in control of the cell cycle, stress response, ribosome biogenesis and in those bacteria that undergo differentiation, in morphogenesis control. The chain is GTPase Obg from Nocardia farcinica (strain IFM 10152).